Reading from the N-terminus, the 381-residue chain is Probable 26S proteasome regulatory subunit rpn9 (381 aa).

A PCI domain is found at Gln-177–Ser-343.

Belongs to the proteasome subunit S11 family.

In terms of biological role, acts as a regulatory subunit of the 26S proteasome which is involved in the ATP-dependent degradation of ubiquitinated proteins. This chain is Probable 26S proteasome regulatory subunit rpn9 (rpn9), found in Schizosaccharomyces pombe (strain 972 / ATCC 24843) (Fission yeast).